A 28-amino-acid polypeptide reads, in one-letter code: Cyclotide ltri-A (28 aa).

Positions 1-28 form a cross-link, cyclopeptide (Gly-Asn); that stretch reads GVACGESCVYLPCFTVGCTCTSSQCFKN. Cystine bridges form between C4–C18, C8–C20, and C13–C25.

Belongs to the cyclotide family. Bracelet subfamily. This is a cyclic peptide.

Functionally, probably participates in a plant defense mechanism. This is Cyclotide ltri-A from Leonia triandra.